The chain runs to 339 residues: Replication factor C subunit 4 (339 aa).

Position 49-56 (49-56) interacts with ATP; sequence GPPGTGKT.

Belongs to the activator 1 small subunits family. In terms of assembly, heterotetramer of subunits RFC2, RFC3, RFC4 and RFC5 that can form a complex with RFC1.

The protein resides in the nucleus. Functionally, may be involved in DNA replication and thus regulate cell proliferation. This Arabidopsis thaliana (Mouse-ear cress) protein is Replication factor C subunit 4 (RFC4).